The chain runs to 132 residues: Small ribosomal subunit protein uS8 (132 aa).

Belongs to the universal ribosomal protein uS8 family. Part of the 30S ribosomal subunit. Contacts proteins S5 and S12.

Functionally, one of the primary rRNA binding proteins, it binds directly to 16S rRNA central domain where it helps coordinate assembly of the platform of the 30S subunit. This chain is Small ribosomal subunit protein uS8, found in Ureaplasma urealyticum serovar 10 (strain ATCC 33699 / Western).